We begin with the raw amino-acid sequence, 243 residues long: Protein-L-isoaspartate O-methyltransferase (243 aa).

Ser87 is a catalytic residue.

It belongs to the methyltransferase superfamily. L-isoaspartyl/D-aspartyl protein methyltransferase family.

The protein localises to the cytoplasm. The catalysed reaction is [protein]-L-isoaspartate + S-adenosyl-L-methionine = [protein]-L-isoaspartate alpha-methyl ester + S-adenosyl-L-homocysteine. Its function is as follows. Catalyzes the methyl esterification of L-isoaspartyl residues in peptides and proteins that result from spontaneous decomposition of normal L-aspartyl and L-asparaginyl residues. It plays a role in the repair and/or degradation of damaged proteins. The chain is Protein-L-isoaspartate O-methyltransferase from Methanosarcina mazei (strain ATCC BAA-159 / DSM 3647 / Goe1 / Go1 / JCM 11833 / OCM 88) (Methanosarcina frisia).